Here is a 210-residue protein sequence, read N- to C-terminus: Somatotropin (210 aa).

An N-terminal signal peptide occupies residues 1-22; that stretch reads MGQVFLLMPVLLVSCFLSQGAA. Histidine 38 is a binding site for Zn(2+). The cysteines at positions 71 and 183 are disulfide-linked. Glutamate 192 serves as a coordination point for Zn(2+). Cysteine 200 and cysteine 208 are disulfide-bonded.

The protein belongs to the somatotropin/prolactin family.

It localises to the secreted. Functionally, growth hormone plays an important role in growth control and is involved in the regulation of several anabolic processes. Implicated as an osmoregulatory substance important for seawater adaptation. This is Somatotropin (gh) from Oncorhynchus tshawytscha (Chinook salmon).